Consider the following 377-residue polypeptide: Acetylornithine aminotransferase (377 aa).

Pyridoxal 5'-phosphate contacts are provided by residues 94–95 (GT) and Phe121. Arg124 contacts N(2)-acetyl-L-ornithine. 206–209 (DEIQ) provides a ligand contact to pyridoxal 5'-phosphate. Residue Lys235 is modified to N6-(pyridoxal phosphate)lysine. Ser263 lines the N(2)-acetyl-L-ornithine pocket. Residue Thr264 participates in pyridoxal 5'-phosphate binding.

Belongs to the class-III pyridoxal-phosphate-dependent aminotransferase family. ArgD subfamily. As to quaternary structure, homodimer. Pyridoxal 5'-phosphate is required as a cofactor.

Its subcellular location is the cytoplasm. It carries out the reaction N(2)-acetyl-L-ornithine + 2-oxoglutarate = N-acetyl-L-glutamate 5-semialdehyde + L-glutamate. It functions in the pathway amino-acid biosynthesis; L-arginine biosynthesis; N(2)-acetyl-L-ornithine from L-glutamate: step 4/4. This is Acetylornithine aminotransferase from Lactococcus lactis subsp. lactis (strain IL1403) (Streptococcus lactis).